The primary structure comprises 144 residues: Histone H2B.2, sperm (144 aa).

Positions 1-51 are disordered; sequence MPRSPSKTSPRKGSPRRGSPSRKASPKRGGKGAKRAGKGGRRRNVVRRRRR. Short sequence motifs (SPKK motif) lie at residues 4 to 7, 9 to 12, 14 to 17, 19 to 22, and 25 to 28; these read SPSK, SPRK, SPRR, SPSR, and SPKR. Residues Ser-14, Ser-19, and Ser-25 each carry the phosphoserine modification. Basic residues predominate over residues 24-51; that stretch reads ASPKRGGKGAKRAGKGGRRRNVVRRRRR. Residue Ser-131 is glycosylated (O-linked (GlcNAc) serine). Lys-139 participates in a covalent cross-link: Glycyl lysine isopeptide (Lys-Gly) (interchain with G-Cter in ubiquitin).

This sequence belongs to the histone H2B family. As to quaternary structure, the nucleosome is a histone octamer containing two molecules each of H2A, H2B, H3 and H4 assembled in one H3-H4 heterotetramer and two H2A-H2B heterodimers. The octamer wraps approximately 147 bp of DNA. In terms of processing, monoubiquitination of Lys-139 gives a specific tag for epigenetic transcriptional activation and is also prerequisite for histone H3 'Lys-4' and 'Lys-79' methylation. Post-translationally, phosphorylated on SPKK motifs 3, 4 and 5; which may regulate DNA binding. Dephosphorylated during maturation of spermatids to mature sperm and rephosphorylated at fertilization. GlcNAcylation at Ser-131 promotes monoubiquitination of Lys-139. It fluctuates in response to extracellular glucose, and associates with transcribed genes.

It is found in the nucleus. The protein resides in the chromosome. Its function is as follows. Core component of nucleosome. Nucleosomes wrap and compact DNA into chromatin, limiting DNA accessibility to the cellular machineries which require DNA as a template. Histones thereby play a central role in transcription regulation, DNA repair, DNA replication and chromosomal stability. DNA accessibility is regulated via a complex set of post-translational modifications of histones, also called histone code, and nucleosome remodeling. This chain is Histone H2B.2, sperm, found in Strongylocentrotus purpuratus (Purple sea urchin).